The sequence spans 228 residues: Fibrillarin-like rRNA/tRNA 2'-O-methyltransferase (228 aa).

S-adenosyl-L-methionine contacts are provided by residues 85–86, 103–104, 128–129, and 148–151; these read TT, EF, DA, and DVAQ.

This sequence belongs to the methyltransferase superfamily. Fibrillarin family. As to quaternary structure, interacts with nop5. Component of box C/D small ribonucleoprotein (sRNP) particles that contain rpl7ae, FlpA and nop5, plus a guide RNA.

Its function is as follows. Involved in pre-rRNA and tRNA processing. Utilizes the methyl donor S-adenosyl-L-methionine to catalyze the site-specific 2'-hydroxyl methylation of ribose moieties in rRNA and tRNA. Site specificity is provided by a guide RNA that base pairs with the substrate. Methylation occurs at a characteristic distance from the sequence involved in base pairing with the guide RNA. The protein is Fibrillarin-like rRNA/tRNA 2'-O-methyltransferase of Methanococcus voltae.